We begin with the raw amino-acid sequence, 275 residues long: Taurine transport system permease protein TauC (275 aa).

Helical transmembrane passes span 20-42, 87-107, 124-144, 146-166, 186-206, 209-229, and 236-256; these read LSRQ…WTVA, IMLA…AMGL, PVPP…GETS, ILLI…AGVK, VLWF…LRIG, VGWS…LGFM, and FLAT…AFLL. One can recognise an ABC transmembrane type-1 domain in the interval 80-264; the sequence is LAASLTRIML…LLELGLRALQ (185 aa).

The protein belongs to the binding-protein-dependent transport system permease family. CysTW subfamily.

The protein resides in the cell inner membrane. Its function is as follows. Part of a binding-protein-dependent transport system for taurine. Probably responsible for the translocation of the substrate across the membrane. The chain is Taurine transport system permease protein TauC (tauC) from Escherichia coli (strain K12).